The primary structure comprises 316 residues: MPQNVVLPGPAPWGFRLSGGIDFNQPLVITRITPGSKAAAANLCPGDVILAIDGFGTESMTHADAQDRIKAASYQLCLKIDRAETRLWSPQVSEDGKAHPFKINLEAEPQEFKPIGTAHNRRAQPFVAAANIDDKRQVVSASYNSPIGLYSTSNIQDALHGQLRGLIPGSLQNEPTASVPPQSDVYRMLHDNRDDPAAPRQSGSFRVLQDLVNDGPDDRPAGTRSVRAPVTKVHGGAGSAQRMPLCDKCGSGIVGAVVKARDKYRHPECFVCADCNLNLKQKGYFFVEGELYCETHARARTRPPEGYDTVTLYPKA.

The PDZ domain maps to 1 to 84 (MPQNVVLPGP…QLCLKIDRAE (84 aa)). Ser18 and Ser93 each carry phosphoserine. Arg164 is subject to Omega-N-methylarginine. The 60-residue stretch at 244–303 (PLCDKCGSGIVGAVVKARDKYRHPECFVCADCNLNLKQKGYFFVEGELYCETHARARTRP) folds into the LIM zinc-binding domain.

In terms of assembly, interacts with ACTN2. Forms a heterodimer with PDLIM4 (via LIM domain).

It localises to the cytoplasm. It is found in the myofibril. The protein resides in the sarcomere. The protein localises to the z line. In terms of biological role, may play a role in the organization of actin filament arrays within muscle cells. This Mus musculus (Mouse) protein is PDZ and LIM domain protein 3 (Pdlim3).